The primary structure comprises 497 residues: NADH-quinone oxidoreductase subunit N (497 aa).

Helical transmembrane passes span 14–34, 45–65, 86–106, 116–136, 137–157, 171–191, 215–235, 253–273, 281–301, 309–329, 338–358, 385–405, 420–439, and 461–481; these read LMAM…MLSI, SLTV…WGLF, IFYS…AYPW, EFYL…SAQH, LAAV…LLGY, YFVL…MLYA, ILAG…LVPF, FLGT…FLYV, LNTA…LMAL, LLGY…IALH, VAVY…VVSL, AAVM…LGFI, WVLT…YYLR, and AFTA…VFGI.

It belongs to the complex I subunit 2 family. In terms of assembly, NDH-1 is composed of 13 different subunits. Subunits NuoA, H, J, K, L, M, N constitute the membrane sector of the complex.

It localises to the cell membrane. It carries out the reaction a quinone + NADH + 5 H(+)(in) = a quinol + NAD(+) + 4 H(+)(out). Its function is as follows. NDH-1 shuttles electrons from NADH, via FMN and iron-sulfur (Fe-S) centers, to quinones in the respiratory chain. The immediate electron acceptor for the enzyme in this species is believed to be ubiquinone. Couples the redox reaction to proton translocation (for every two electrons transferred, four hydrogen ions are translocated across the cytoplasmic membrane), and thus conserves the redox energy in a proton gradient. The polypeptide is NADH-quinone oxidoreductase subunit N (Hamiltonella defensa subsp. Acyrthosiphon pisum (strain 5AT)).